We begin with the raw amino-acid sequence, 226 residues long: 7-cyano-7-deazaguanine synthase (226 aa).

9–19 (LSGGLDSATVL) contributes to the ATP binding site. Residues cysteine 189, cysteine 199, cysteine 202, and cysteine 205 each coordinate Zn(2+).

This sequence belongs to the QueC family. Zn(2+) serves as cofactor.

It carries out the reaction 7-carboxy-7-deazaguanine + NH4(+) + ATP = 7-cyano-7-deazaguanine + ADP + phosphate + H2O + H(+). It participates in purine metabolism; 7-cyano-7-deazaguanine biosynthesis. In terms of biological role, catalyzes the ATP-dependent conversion of 7-carboxy-7-deazaguanine (CDG) to 7-cyano-7-deazaguanine (preQ(0)). The chain is 7-cyano-7-deazaguanine synthase from Cupriavidus pinatubonensis (strain JMP 134 / LMG 1197) (Cupriavidus necator (strain JMP 134)).